The following is a 620-amino-acid chain: Chaperone protein HscA homolog (620 aa).

This sequence belongs to the heat shock protein 70 family.

Its function is as follows. Chaperone involved in the maturation of iron-sulfur cluster-containing proteins. Has a low intrinsic ATPase activity which is markedly stimulated by HscB. This chain is Chaperone protein HscA homolog, found in Pseudomonas savastanoi pv. phaseolicola (strain 1448A / Race 6) (Pseudomonas syringae pv. phaseolicola (strain 1448A / Race 6)).